The following is a 112-amino-acid chain: Protein preY, mitochondrial (112 aa).

A mitochondrion-targeting transit peptide spans M1 to S34. Positions H49–Q95 constitute a TRM112 domain.

This sequence belongs to the PREY family. Interacts (via TRM112 domain) with NDUFAF5; the interaction is direct and stabilizes NDUFAF5 protein. Interacts with COQ5; the interaction is direct, stabilizes COQ5 protein and associates PYURF with COQ enzyme complex.

It localises to the mitochondrion. Its function is as follows. In mitochondria, S-adenosylmethionine-dependent methyltransferase chaperone that supports both coenzyme Q biosynthesis, by stabilizing its components, such as COQ5, and NADH:ubiquinone oxidoreductase complex (complex I, MT-ND1) assembly, by stabilizing complex I assembly factors, such as NDUFAF5. The protein is Protein preY, mitochondrial (Pyurf) of Rattus norvegicus (Rat).